Reading from the N-terminus, the 683-residue chain is E3 ubiquitin-protein ligase RNF103 (683 aa).

A run of 4 helical transmembrane segments spans residues 6-26, 326-346, 366-386, and 411-431; these read FFLL…EAIV, LFVL…FITQ, LLII…LDSF, and MFYT…GLLI. Over residues 525–542 the composition is skewed to acidic residues; that stretch reads EEMSESSQDTENDSDSDN. The disordered stretch occupies residues 525 to 548; sequence EEMSESSQDTENDSDSDNMDTFSS. The RING-type zinc-finger motif lies at 619–661; it reads CVVCLENFENGCLLMGLPCGHVFHQNCIVMWLAGGRHCCPVCR.

As to quaternary structure, interacts with DERL1 and VCP. As to expression, highly expressed in the normal cerebellum but not in the cerebral cortex.

The protein resides in the endoplasmic reticulum membrane. It catalyses the reaction S-ubiquitinyl-[E2 ubiquitin-conjugating enzyme]-L-cysteine + [acceptor protein]-L-lysine = [E2 ubiquitin-conjugating enzyme]-L-cysteine + N(6)-ubiquitinyl-[acceptor protein]-L-lysine.. The protein operates within protein modification; protein ubiquitination. In terms of biological role, acts as an E2-dependent E3 ubiquitin-protein ligase, probably involved in the ER-associated protein degradation pathway. The chain is E3 ubiquitin-protein ligase RNF103 (Rnf103) from Mus musculus (Mouse).